The primary structure comprises 923 residues: Serine/threonine-protein phosphatase 6 regulatory subunit 2 (923 aa).

Serine 289 carries the post-translational modification Phosphoserine. 3 disordered regions span residues 409–441 (EASGSDGKVEPLQGSGDGNGKLETTPSITSPPE), 662–685 (VPGLAAPSSPTQKEGPRSESDSAG), and 743–766 (RCSSPVDMDHSNAEGGQSPGPEKT). A compositionally biased stretch (polar residues) spans 430 to 441 (LETTPSITSPPE). Serine 746 and serine 796 each carry phosphoserine.

It belongs to the SAPS family. In terms of assembly, protein phosphatase 6 (PP6) holoenzyme is proposed to be a heterotrimeric complex formed by the catalytic subunit, a SAPS domain-containing subunit (PP6R) and an ankyrin repeat-domain containing regulatory subunit (ARS). Interacts with PPP6C and NFKBIE. Interacts with ANKRD28. As to expression, strongest expression in bladder and lower levels found in heart and pancreas. Very weak expression observed in all other tissues tested.

The protein localises to the cytoplasm. Regulatory subunit of protein phosphatase 6 (PP6). May function as a scaffolding PP6 subunit. Involved in the PP6-mediated dephosphorylation of NFKBIE opposing its degradation in response to TNF-alpha. This Mus musculus (Mouse) protein is Serine/threonine-protein phosphatase 6 regulatory subunit 2 (Ppp6r2).